The primary structure comprises 390 residues: Phosphopentomutase (390 aa).

Mn(2+)-binding residues include aspartate 10, aspartate 284, histidine 289, aspartate 325, histidine 326, and histidine 337.

This sequence belongs to the phosphopentomutase family. Mn(2+) is required as a cofactor.

It localises to the cytoplasm. The enzyme catalyses 2-deoxy-alpha-D-ribose 1-phosphate = 2-deoxy-D-ribose 5-phosphate. It carries out the reaction alpha-D-ribose 1-phosphate = D-ribose 5-phosphate. It participates in carbohydrate degradation; 2-deoxy-D-ribose 1-phosphate degradation; D-glyceraldehyde 3-phosphate and acetaldehyde from 2-deoxy-alpha-D-ribose 1-phosphate: step 1/2. Isomerase that catalyzes the conversion of deoxy-ribose 1-phosphate (dRib-1-P) and ribose 1-phosphate (Rib-1-P) to deoxy-ribose 5-phosphate (dRib-5-P) and ribose 5-phosphate (Rib-5-P), respectively. This is Phosphopentomutase from Clostridioides difficile (strain 630) (Peptoclostridium difficile).